Consider the following 213-residue polypeptide: Adenylyl-sulfate kinase (213 aa).

Residues 1-17 (MPAHQLDDHNQETRSDD) are compositionally biased toward basic and acidic residues. The disordered stretch occupies residues 1 to 20 (MPAHQLDDHNQETRSDDENI). Position 47-54 (47-54 (GLSGSGKS)) interacts with ATP. Ser121 acts as the Phosphoserine intermediate in catalysis.

The protein belongs to the APS kinase family.

The catalysed reaction is adenosine 5'-phosphosulfate + ATP = 3'-phosphoadenylyl sulfate + ADP + H(+). The protein operates within sulfur metabolism; hydrogen sulfide biosynthesis; sulfite from sulfate: step 2/3. Its function is as follows. Catalyzes the synthesis of activated sulfate. This is Adenylyl-sulfate kinase from Yersinia pestis.